The chain runs to 158 residues: NADH-quinone oxidoreductase subunit B (158 aa).

Residues Cys37, Cys38, Cys102, and Cys132 each contribute to the [4Fe-4S] cluster site.

Belongs to the complex I 20 kDa subunit family. NDH-1 is composed of 14 different subunits. Subunits NuoB, C, D, E, F, and G constitute the peripheral sector of the complex. It depends on [4Fe-4S] cluster as a cofactor.

It is found in the cell inner membrane. The enzyme catalyses a quinone + NADH + 5 H(+)(in) = a quinol + NAD(+) + 4 H(+)(out). Functionally, NDH-1 shuttles electrons from NADH, via FMN and iron-sulfur (Fe-S) centers, to quinones in the respiratory chain. The immediate electron acceptor for the enzyme in this species is believed to be ubiquinone. Couples the redox reaction to proton translocation (for every two electrons transferred, four hydrogen ions are translocated across the cytoplasmic membrane), and thus conserves the redox energy in a proton gradient. In Halorhodospira halophila (strain DSM 244 / SL1) (Ectothiorhodospira halophila (strain DSM 244 / SL1)), this protein is NADH-quinone oxidoreductase subunit B.